Consider the following 308-residue polypeptide: Uridine diphosphate glucose pyrophosphatase NUDT22 (308 aa).

Substrate-binding residues include phenylalanine 56, tyrosine 86, arginine 138, alanine 143, aspartate 150, histidine 155, and glutamate 157. A Nudix hydrolase domain is found at 117–284; that stretch reads ADPLGVGAAL…KGAILLYNRH (168 aa). The Nudix box motif lies at 174-195; that stretch reads GLLVVRELFSSVLQEICDEVNL. Residues glutamate 188 and glutamate 192 each contribute to the Mg(2+) site. Serine 273 provides a ligand contact to substrate.

Belongs to the Nudix hydrolase family. It depends on Mg(2+) as a cofactor.

The enzyme catalyses UDP-sugar + H2O = UMP + alpha-D-aldose 1-phosphate.. In terms of biological role, hydrolyzes UDP-glucose to glucose 1-phosphate and UMP and UDP-galactose to galactose 1-phosphate and UMP. Preferred substrate is UDP-glucose. The sequence is that of Uridine diphosphate glucose pyrophosphatase NUDT22 (Nudt22) from Mus musculus (Mouse).